We begin with the raw amino-acid sequence, 310 residues long: Ribosomal RNA large subunit methyltransferase F (310 aa).

This sequence belongs to the methyltransferase superfamily. METTL16/RlmF family.

It is found in the cytoplasm. It catalyses the reaction adenosine(1618) in 23S rRNA + S-adenosyl-L-methionine = N(6)-methyladenosine(1618) in 23S rRNA + S-adenosyl-L-homocysteine + H(+). Its function is as follows. Specifically methylates the adenine in position 1618 of 23S rRNA. This chain is Ribosomal RNA large subunit methyltransferase F, found in Psychromonas ingrahamii (strain DSM 17664 / CCUG 51855 / 37).